A 1141-amino-acid chain; its full sequence is DNA-directed RNA polymerase subunit beta (1141 aa).

The disordered stretch occupies residues 1117–1141 (GINISREEPPGQLDDTPDTFSRGGM).

Belongs to the RNA polymerase beta chain family. In terms of assembly, the RNAP catalytic core consists of 2 alpha, 1 beta, 1 beta' and 1 omega subunit. When a sigma factor is associated with the core the holoenzyme is formed, which can initiate transcription.

It catalyses the reaction RNA(n) + a ribonucleoside 5'-triphosphate = RNA(n+1) + diphosphate. In terms of biological role, DNA-dependent RNA polymerase catalyzes the transcription of DNA into RNA using the four ribonucleoside triphosphates as substrates. The polypeptide is DNA-directed RNA polymerase subunit beta (Rubrobacter xylanophilus (strain DSM 9941 / JCM 11954 / NBRC 16129 / PRD-1)).